A 612-amino-acid polypeptide reads, in one-letter code: Protein MUK1 (612 aa).

The segment covering 40-50 has biased composition (basic and acidic residues); that stretch reads EDQNDNERSSC. The interval 40–66 is disordered; that stretch reads EDQNDNERSSCDGDENSTTGERLENNK. The segment covering 55 to 66 has biased composition (polar residues); sequence NSTTGERLENNK. Phosphoserine is present on residues serine 67, serine 163, serine 185, and serine 245. A VPS9 domain is found at 273–414; the sequence is TEYNKLLNEK…VEGLTKNDFS (142 aa). The disordered stretch occupies residues 494-560; sequence IRSYTPPHPN…SSASLEHGNR (67 aa). Residues 503 to 517 are compositionally biased toward low complexity; sequence NNTSNNNLHSSNNLN. The segment covering 518–529 has biased composition (polar residues); the sequence is IPRSSSQLSMEL. A compositionally biased stretch (basic and acidic residues) spans 530–542; the sequence is SNRDTTEMSRDGS. Residues 543-554 show a composition bias toward low complexity; the sequence is RSTSSSSRSSAS.

It localises to the cytoplasm. Its function is as follows. Putative GTPase-activating protein. In Saccharomyces cerevisiae (strain ATCC 204508 / S288c) (Baker's yeast), this protein is Protein MUK1 (MUK1).